Consider the following 72-residue polypeptide: Long neurotoxin 1 (72 aa).

5 disulfide bridges follow: Cys-3-Cys-21, Cys-14-Cys-42, Cys-27-Cys-31, Cys-46-Cys-57, and Cys-58-Cys-63.

Belongs to the three-finger toxin family. Long-chain subfamily. Type II alpha-neurotoxin sub-subfamily. Expressed by the venom gland.

Its subcellular location is the secreted. Its function is as follows. Binds with high affinity to muscular (alpha-1/CHRNA1) and neuronal (alpha-7/CHRNA7) nicotinic acetylcholine receptor (nAChR) and inhibits acetylcholine from binding to the receptor, thereby impairing neuromuscular and neuronal transmission. This is Long neurotoxin 1 from Naja anchietae (Anchieta's cobra).